A 135-amino-acid polypeptide reads, in one-letter code: MVSRDFDRDKRLLTARQFSAVFDSPTGKVPGKHVLLLARENGLDHPRLGLVIGKKNVKLAVQRNRLKRLIRESFRHNQEALAGWDIVMIARKGLGELENPELHQQFGKLWKRLLRNRPRTESPADAPGVADGTHA.

The protein belongs to the RnpA family. In terms of assembly, consists of a catalytic RNA component (M1 or rnpB) and a protein subunit.

It catalyses the reaction Endonucleolytic cleavage of RNA, removing 5'-extranucleotides from tRNA precursor.. RNaseP catalyzes the removal of the 5'-leader sequence from pre-tRNA to produce the mature 5'-terminus. It can also cleave other RNA substrates such as 4.5S RNA. The protein component plays an auxiliary but essential role in vivo by binding to the 5'-leader sequence and broadening the substrate specificity of the ribozyme. The protein is Ribonuclease P protein component of Pseudomonas paraeruginosa (strain DSM 24068 / PA7) (Pseudomonas aeruginosa (strain PA7)).